Reading from the N-terminus, the 618-residue chain is Nuclear RNA export factor 1 (618 aa).

Basic and acidic residues predominate over residues 1–15; the sequence is MADEGKSYNEHDDRV. A disordered region spans residues 1–113; that stretch reads MADEGKSYNE…RGGAGTSQDG (113 aa). The residue at position 2 (Ala2) is an N-acetylalanine. The minor non-specific RNA-binding stretch occupies residues 2–59; sequence ADEGKSYNEHDDRVSFPQRRKKGRGPFRWKCGVGNRRSGRGGSGIRSSRFEEDDGDVA. The tract at residues 2–117 is RNA-binding (RBD); the sequence is ADEGKSYNEH…GTSQDGTTKN (116 aa). The interaction with ALYREF/THOC4 and LUZP4 stretch occupies residues 2-197; sequence ADEGKSYNEH…IIINSSAPPY (196 aa). The span at 19–28 shows a compositional bias: basic residues; the sequence is QRRKKGRGPF. An Asymmetric dimethylarginine; alternate modification is found at Arg41. Arg41 is subject to Omega-N-methylarginine; alternate. A major non-specific RNA-binding region spans residues 60–117; that stretch reads MNDPQDGPRVRFNPYTTRPNRRRDTWHDRDRIHVTVRRDRAPQERGGAGTSQDGTTKN. The segment at 60–117 is RNA binding; sequence MNDPQDGPRVRFNPYTTRPNRRRDTWHDRDRIHVTVRRDRAPQERGGAGTSQDGTTKN. The Nuclear localization signal signature appears at 66 to 99; the sequence is GPRVRFNPYTTRPNRRRDTWHDRDRIHVTVRRDR. Residues 81-102 show a composition bias toward basic and acidic residues; sequence RRDTWHDRDRIHVTVRRDRAPQ. Residues 82–109 carry the Nuclear export signal motif; it reads RDTWHDRDRIHVTVRRDRAPQERGGAGT. The RRM domain occupies 118–197; the sequence is WFKITIPYGK…IIINSSAPPY (80 aa). Tyr125 bears the 3'-nitrotyrosine mark. LRR repeat units lie at residues 265 to 290, 291 to 314, 315 to 342, and 343 to 370; these read ELLS…QKAP, NLKI…IKGL, KLEE…TIRE, and RFPK…TMLP. Positions 385 to 535 constitute an NTF2 domain; that stretch reads LVLHFLQQYY…LCIVNDELFV (151 aa). In terms of domain architecture, TAP-C spans 564-618; it reads QEQQDMLQAFSTQSGMNLEWSQKCLQDNNWDYTRSAQAFTHLKAKGEIPEVAFMK.

The protein belongs to the NXF family. As to quaternary structure, heterodimer (via NTF2 domain) with NXT1. The formation of NXF1-NXT1 heterodimers is required for the NXF1-mediated nuclear mRNA export. Forms a complex with RANBP2/NUP358, NXT1 and RANGAP1. Associates with the exon junction complex (EJC). Associates with the transcription/export (TREX) complex. Found in a mRNA complex with UPF3A and UPF3B. Found in a post-splicing complex with RBM8A, UPF1, UPF2, UPF3A, UPF3B and RNPS1. Interacts (via N-terminus) with DHX9 (via N-terminus); this interaction is direct and negatively regulates NXF1-mediated nuclear export of constitutive transport element (CTE)-containing cellular mRNAs. Interacts with FYTTD1/UIF. Interacts with EIF4A3. Interacts with NUP42. Interacts with ALYREF/THOC4. Interacts with CHTOP. Interacts with FRG1 (via N-terminus). Interacts with LUZP4. Interacts with FMR1; the interaction occurs in a mRNA-dependent and polyribosomes-independent manner in the nucleus. Interacts with CPSF6 (via N-terminus); this interaction is direct. Interacts with RBM15. Interacts with RBM15B. Interacts with MCM3AP; this interaction is not mediated by RNA. Interacts with DDX3X (via C-terminus); this interaction may be partly involved in DDX3X nuclear export and in NXF1 localization to stress granules. Interacts with PABPC1/PABP1.

The protein resides in the nucleus. It localises to the nucleoplasm. The protein localises to the nucleus speckle. It is found in the nuclear pore complex. Its subcellular location is the nucleus envelope. The protein resides in the cytoplasm. It localises to the stress granule. Involved in the nuclear export of mRNA species bearing retroviral constitutive transport elements (CTE) and in the export of mRNA from the nucleus to the cytoplasm (TAP/NFX1 pathway). The NXF1-NXT1 heterodimer is involved in the export of HSP70 mRNA in conjunction with ALYREF/THOC4 and THOC5 components of the TREX complex. ALYREF/THOC4-bound mRNA is thought to be transferred to the NXF1-NXT1 heterodimer for export. Also involved in nuclear export of m6A-containing mRNAs: interaction between SRSF3 and YTHDC1 facilitates m6A-containing mRNA-binding to both SRSF3 and NXF1, promoting mRNA nuclear export. The protein is Nuclear RNA export factor 1 (Nxf1) of Rattus norvegicus (Rat).